Reading from the N-terminus, the 101-residue chain is Large ribosomal subunit protein uL23 (101 aa).

It belongs to the universal ribosomal protein uL23 family. In terms of assembly, part of the 50S ribosomal subunit. Contacts protein L29, and trigger factor when it is bound to the ribosome.

Functionally, one of the early assembly proteins it binds 23S rRNA. One of the proteins that surrounds the polypeptide exit tunnel on the outside of the ribosome. Forms the main docking site for trigger factor binding to the ribosome. This is Large ribosomal subunit protein uL23 from Kocuria rhizophila (strain ATCC 9341 / DSM 348 / NBRC 103217 / DC2201).